The primary structure comprises 99 residues: MADALGMIEVRGFVGMVEAADAMVKAAKVELIGYEKTGGGYVTAVVRGDVAAVKAATEAGQRAAERVGEVVAVHVIPRPHVNVDAALPLGRTPGMDKSA.

The region spanning 4 to 88 (ALGMIEVRGF…PHVNVDAALP (85 aa)) is the BMC domain.

Belongs to the bacterial microcompartments protein family. Homohexamer with a small central pore. When purified protein is examined by atomic force microscopy it dynamically makes uniform patches about 35 Angstroms thick with hexamers in the same orientation. In the BMC the concave side faces outward, with the N- and C-terminii exposed to the cytoplasm.

The protein resides in the bacterial microcompartment. Functionally, the only hexameric shell protein in this bacterium, it forms the majority of the bacterial microcompartment (BMC) shell. Expression of 5 proteins in E.coli (BMC-H (Hoch_5815), BMC-P (Hoch_5814), and 3 BMC-T (Hoch_5812, Hoch_5816, Hoch_3341)) forms a 40 nm artificial BMC with a molecular mass of 6.5 MDa. There are 60 BMC-H hexamers per BMC. The shell facets are 20-30 Angstroms thick (a single hexamer layer), with 1 of BMC-T trimers protruding to the exterior. This chain is Bacterial microcompartment protein homohexamer, found in Haliangium ochraceum (strain DSM 14365 / JCM 11303 / SMP-2).